The following is a 105-amino-acid chain: Thioredoxin (105 aa).

One can recognise a Thioredoxin domain in the interval 2 to 105 (VKLIESKEAF…KLEASITEYA (104 aa)). Lysine 3 carries the post-translational modification N6-acetyllysine. Lysine 8 is subject to N6-succinyllysine. Residues cysteine 32 and cysteine 35 each act as nucleophile in the active site. The cysteines at positions 32 and 35 are disulfide-linked. Lysine 39 is subject to N6-acetyllysine. S-nitrosocysteine is present on residues cysteine 62 and cysteine 69. Cysteine 73 carries the S-nitrosocysteine; alternate modification. Lysine 94 is modified (N6-acetyllysine; alternate). An N6-succinyllysine; alternate modification is found at lysine 94.

This sequence belongs to the thioredoxin family. As to quaternary structure, homodimer; disulfide-linked. Interacts with TXNIP through the redox-active site. Interacts with MAP3K5 and CASP3. Interacts with APEX1; the interaction stimulates the FOS/JUN AP-1 DNA-binding activity in a redox-dependent manner. Post-translationally, in the fully reduced protein, both Cys-69 and Cys-73 are nitrosylated in response to nitric oxide (NO). When two disulfide bonds are present in the protein, only Cys-73 is nitrosylated. Cys-73 can serve as donor for nitrosylation of target proteins.

Its subcellular location is the nucleus. It is found in the cytoplasm. The protein resides in the secreted. Participates in various redox reactions through the reversible oxidation of its active center dithiol to a disulfide and catalyzes dithiol-disulfide exchange reactions. Plays a role in the reversible S-nitrosylation of cysteine residues in target proteins, and thereby contributes to the response to intracellular nitric oxide. Nitrosylates the active site Cys of CASP3 in response to nitric oxide (NO), and thereby inhibits caspase-3 activity. Induces the FOS/JUN AP-1 DNA binding activity in ionizing radiation (IR) cells through its oxidation/reduction status and stimulates AP-1 transcriptional activity. Functionally, ADF augments the expression of the interleukin-2 receptor TAC (IL2R/P55). In Mus musculus (Mouse), this protein is Thioredoxin (Txn).